Consider the following 342-residue polypeptide: Biotin synthase (342 aa).

Residues 63-288 (PEVEVEGIIS…RTMLRFAGGR (226 aa)) form the Radical SAM core domain. The [4Fe-4S] cluster site is built by cysteine 78, cysteine 82, and cysteine 85. Cysteine 121, cysteine 154, cysteine 213, and arginine 283 together coordinate [2Fe-2S] cluster.

The protein belongs to the radical SAM superfamily. Biotin synthase family. As to quaternary structure, homodimer. [4Fe-4S] cluster is required as a cofactor. Requires [2Fe-2S] cluster as cofactor.

It catalyses the reaction (4R,5S)-dethiobiotin + (sulfur carrier)-SH + 2 reduced [2Fe-2S]-[ferredoxin] + 2 S-adenosyl-L-methionine = (sulfur carrier)-H + biotin + 2 5'-deoxyadenosine + 2 L-methionine + 2 oxidized [2Fe-2S]-[ferredoxin]. It functions in the pathway cofactor biosynthesis; biotin biosynthesis; biotin from 7,8-diaminononanoate: step 2/2. Catalyzes the conversion of dethiobiotin (DTB) to biotin by the insertion of a sulfur atom into dethiobiotin via a radical-based mechanism. In Mycobacteroides abscessus (strain ATCC 19977 / DSM 44196 / CCUG 20993 / CIP 104536 / JCM 13569 / NCTC 13031 / TMC 1543 / L948) (Mycobacterium abscessus), this protein is Biotin synthase.